A 339-amino-acid chain; its full sequence is Phenylalanine--tRNA ligase alpha subunit (339 aa).

Glutamate 250 provides a ligand contact to Mg(2+).

Belongs to the class-II aminoacyl-tRNA synthetase family. Phe-tRNA synthetase alpha subunit type 1 subfamily. As to quaternary structure, tetramer of two alpha and two beta subunits. The cofactor is Mg(2+).

The protein resides in the cytoplasm. The enzyme catalyses tRNA(Phe) + L-phenylalanine + ATP = L-phenylalanyl-tRNA(Phe) + AMP + diphosphate + H(+). This is Phenylalanine--tRNA ligase alpha subunit from Bacteroides thetaiotaomicron (strain ATCC 29148 / DSM 2079 / JCM 5827 / CCUG 10774 / NCTC 10582 / VPI-5482 / E50).